A 65-amino-acid polypeptide reads, in one-letter code: Large ribosomal subunit protein bL31 (65 aa).

Cysteine 16, cysteine 18, cysteine 36, and cysteine 39 together coordinate Zn(2+).

Belongs to the bacterial ribosomal protein bL31 family. Type A subfamily. As to quaternary structure, part of the 50S ribosomal subunit. Zn(2+) is required as a cofactor.

Its function is as follows. Binds the 23S rRNA. In Geobacter sulfurreducens (strain ATCC 51573 / DSM 12127 / PCA), this protein is Large ribosomal subunit protein bL31.